The chain runs to 873 residues: Chitin synthase F (873 aa).

Positions Met1 to Pro105 are disordered. Polar residues-rich tracts occupy residues Ser33–Leu46, Ile58–Ser72, and Glu80–Gly98. N-linked (GlcNAc...) asparagine glycosylation occurs at Asn506. The next 7 membrane-spanning stretches (helical) occupy residues Leu532–Ala554, Ile588–Ala608, Ile621–Leu641, Gly672–Tyr692, Ser702–Cys722, Leu802–Val822, and Val841–Leu861.

The protein belongs to the chitin synthase family. Class III subfamily.

The protein localises to the cell membrane. It catalyses the reaction [(1-&gt;4)-N-acetyl-beta-D-glucosaminyl](n) + UDP-N-acetyl-alpha-D-glucosamine = [(1-&gt;4)-N-acetyl-beta-D-glucosaminyl](n+1) + UDP + H(+). In terms of biological role, polymerizes chitin, a structural polymer of the cell wall and septum, by transferring the sugar moiety of UDP-GlcNAc to the non-reducing end of the growing chitin polymer. Plays an important role in septal growth or maintenance. Mediates colony spore formation. The polypeptide is Chitin synthase F (Aspergillus niger (strain ATCC MYA-4892 / CBS 513.88 / FGSC A1513)).